A 236-amino-acid polypeptide reads, in one-letter code: MPGSAGWRKVFGGTGGATGALPRHGRGSIVYARSTTIEAQPLSVDIGIAHVRDVVMPALQEIDGCVGVSLLVDRQSGRCIATSAWETLEAMRASVERVAPIRDRAALMFAGSARVEEWDIALLHRDHPSHEGACVRATWLKVVPDQLGRSLEFYRTSVLPELESLDGFCSASLMVDHPACRRAVSCSTFDSMDAMARNRDRASELRSRRVRELGAEVLDVAEFELAIAHLRVPELV.

To M.tuberculosis Rv2557.

This is an uncharacterized protein from Mycobacterium tuberculosis (strain CDC 1551 / Oshkosh).